A 118-amino-acid chain; its full sequence is Small ribosomal subunit protein uS13 (118 aa).

The tract at residues 93 to 118 is disordered; it reads RGLPVRGQRTKTNARTRKGPRKPIRK.

Belongs to the universal ribosomal protein uS13 family. Part of the 30S ribosomal subunit. Forms a loose heterodimer with protein S19. Forms two bridges to the 50S subunit in the 70S ribosome.

Located at the top of the head of the 30S subunit, it contacts several helices of the 16S rRNA. In the 70S ribosome it contacts the 23S rRNA (bridge B1a) and protein L5 of the 50S subunit (bridge B1b), connecting the 2 subunits; these bridges are implicated in subunit movement. Contacts the tRNAs in the A and P-sites. The sequence is that of Small ribosomal subunit protein uS13 from Pseudomonas fluorescens (strain Pf0-1).